A 178-amino-acid polypeptide reads, in one-letter code: ATP-dependent protease subunit HslV (178 aa).

Residue Thr-7 is part of the active site. The Na(+) site is built by Gly-162, Cys-165, and Thr-168.

The protein belongs to the peptidase T1B family. HslV subfamily. As to quaternary structure, a double ring-shaped homohexamer of HslV is capped on each side by a ring-shaped HslU homohexamer. The assembly of the HslU/HslV complex is dependent on binding of ATP.

Its subcellular location is the cytoplasm. It catalyses the reaction ATP-dependent cleavage of peptide bonds with broad specificity.. With respect to regulation, allosterically activated by HslU binding. Functionally, protease subunit of a proteasome-like degradation complex believed to be a general protein degrading machinery. This Ralstonia nicotianae (strain ATCC BAA-1114 / GMI1000) (Ralstonia solanacearum) protein is ATP-dependent protease subunit HslV.